The chain runs to 198 residues: Large ribosomal subunit protein bL25 (198 aa).

This sequence belongs to the bacterial ribosomal protein bL25 family. CTC subfamily. In terms of assembly, part of the 50S ribosomal subunit; part of the 5S rRNA/L5/L18/L25 subcomplex. Contacts the 5S rRNA. Binds to the 5S rRNA independently of L5 and L18.

Functionally, this is one of the proteins that binds to the 5S RNA in the ribosome where it forms part of the central protuberance. The protein is Large ribosomal subunit protein bL25 of Pseudomonas putida (strain W619).